A 457-amino-acid chain; its full sequence is Glucuronide carrier protein homolog (457 aa).

The Cytoplasmic segment spans residues 1–11 (MNQQLSWRTIV). Residues 12 to 34 (GYSLGDVANNFAFAMGALFLLSY) traverse the membrane as a helical segment. Residues 35 to 37 (YTD) are Periplasmic-facing. The helical transmembrane segment at 38–60 (VAGVGAAAAGTMLLLVRVFDAFA) threads the bilayer. Residues 61 to 79 (DVFAGRVVDSVNTRWGKFR) lie on the Cytoplasmic side of the membrane. Residues 80–100 (PFLLFGTAPLMIFSVLVFWVL) traverse the membrane as a helical segment. Over 101–108 (TDWSHGSK) the chain is Periplasmic. A helical transmembrane segment spans residues 109–129 (VVYAYLTYMGLGLCYSLVNIP). Residues 130 to 146 (YGSLATAMTQQPQSRAR) are Cytoplasmic-facing. A helical membrane pass occupies residues 147-167 (LGAARGIAASLTFVCLAFLIG). Over 168 to 180 (PSIKNSSPEEMVS) the chain is Periplasmic. Residues 181 to 201 (VYHFWTIVLAIAGMVLYFICF) traverse the membrane as a helical segment. At 202-228 (KSTRENVVRIVAQPSLNISLQTLKRNR) the chain is on the cytoplasmic side. A helical membrane pass occupies residues 229–249 (PLFMLCIGALCVLISTFAVSA). Residues 250-263 (SSLFYVRYVLNDTG) lie on the Periplasmic side of the membrane. A helical transmembrane segment spans residues 264 to 284 (LFTVLVLVQNLVGTVASAPLV). Residues 285–296 (PGMVARIGKKNT) are Cytoplasmic-facing. The helical transmembrane segment at 297–316 (FLIGALLGTCGYLLFFWVSV) threads the bilayer. At 317–320 (WSLP) the chain is on the periplasmic side. Residues 321–343 (VALVALAIASIGQGVTMTVMWAL) traverse the membrane as a helical segment. The Cytoplasmic portion of the chain corresponds to 344-372 (EADTVEYGEYLTGVRIEGLTYSLFSFTRK). Residues 373-393 (CGQAIGGSIPAFILGLSGYIA) traverse the membrane as a helical segment. Over 394–408 (NQVQTPEVIMGIRTS) the chain is Periplasmic. Residues 409 to 429 (IALVPCGFMLLAFVIIWFYPL) traverse the membrane as a helical segment. Residues 430-457 (TDKKFKEIVVEIDNRKKVQQQLISDITN) lie on the Cytoplasmic side of the membrane.

This sequence belongs to the sodium:galactoside symporter (TC 2.A.2) family.

The protein localises to the cell inner membrane. The chain is Glucuronide carrier protein homolog (uidB) from Escherichia coli (strain K12).